The primary structure comprises 97 residues: Protein E7 (97 aa).

The E7 terminal domain stretch occupies residues 1–44 (MHGKKPSVQDIVLDLKPTTETDLTCYESLDNSEDEDETDSHLER). Positions 23–27 (LTCYE) match the LXCXE motif; interaction with host RB1 and TMEM173/STING motif. The segment at 57–93 (CSRCQSTVCLTIESTHADLLVLEDLLMGALKIVCPNC) is a zinc-finger region. The Nuclear export signal signature appears at 75–83 (LLVLEDLLM).

It belongs to the papillomaviridae E7 protein family. As to quaternary structure, homodimer. Homooligomer. Interacts with host RB1; this interaction induces dissociation of RB1-E2F1 complex thereby disrupting RB1 activity. Interacts with host EP300; this interaction represses EP300 transcriptional activity. Interacts with protein E2; this interaction inhibits E7 oncogenic activity. Interacts with host TMEM173/STING; this interaction impairs the ability of TMEM173/STING to sense cytosolic DNA and promote the production of type I interferon (IFN-alpha and IFN-beta). In terms of processing, highly phosphorylated.

It is found in the host cytoplasm. Its subcellular location is the host nucleus. Plays a role in viral genome replication by driving entry of quiescent cells into the cell cycle. Stimulation of progression from G1 to S phase allows the virus to efficiently use the cellular DNA replicating machinery to achieve viral genome replication. E7 protein has both transforming and trans-activating activities. Induces the disassembly of the E2F1 transcription factor from RB1, with subsequent transcriptional activation of E2F1-regulated S-phase genes. Interferes with host histone deacetylation mediated by HDAC1 and HDAC2, leading to transcription activation. Also plays a role in the inhibition of both antiviral and antiproliferative functions of host interferon alpha. Interaction with host TMEM173/STING impairs the ability of TMEM173/STING to sense cytosolic DNA and promote the production of type I interferon (IFN-alpha and IFN-beta). The chain is Protein E7 from Human papillomavirus type 34.